The chain runs to 138 residues: Ribosome-binding factor A (138 aa).

The disordered stretch occupies residues 117-138 (AEDGQHQEGPASADAKPESTEE).

Belongs to the RbfA family. As to quaternary structure, monomer. Binds 30S ribosomal subunits, but not 50S ribosomal subunits or 70S ribosomes.

The protein localises to the cytoplasm. Functionally, one of several proteins that assist in the late maturation steps of the functional core of the 30S ribosomal subunit. Associates with free 30S ribosomal subunits (but not with 30S subunits that are part of 70S ribosomes or polysomes). Required for efficient processing of 16S rRNA. May interact with the 5'-terminal helix region of 16S rRNA. The polypeptide is Ribosome-binding factor A (Pseudomonas syringae pv. syringae (strain B728a)).